Consider the following 263-residue polypeptide: Phosphoinositide-3-kinase-interacting protein 1 (263 aa).

The first 21 residues, 1 to 21 (MLLAWVQAFLVSNMLLAEAYG), serve as a signal peptide directing secretion. The Extracellular segment spans residues 22–168 (SGGCFWDNGH…NSKEKKDLGT (147 aa)). The region spanning 24–101 (GCFWDNGHLY…EKRPCEDLRC (78 aa)) is the Kringle domain. Cystine bridges form between cysteine 25–cysteine 101, cysteine 46–cysteine 82, and cysteine 70–cysteine 96. Serine 39 carries O-linked (GalNAc...) serine glycosylation. N-linked (GlcNAc...) (complex) asparagine glycosylation occurs at asparagine 66. A helical membrane pass occupies residues 169–189 (LGYVLGITMMVIIIAIGAGII). Residues 190-263 (LGYSYKRGKD…LMGQAGTPGA (74 aa)) lie on the Cytoplasmic side of the membrane. The span at 242–251 (QTPVDPQEGT) shows a compositional bias: polar residues. The disordered stretch occupies residues 242 to 263 (QTPVDPQEGTTPLMGQAGTPGA).

Post-translationally, N- and O-glycosylated. O-glycosylated with core 1 or possibly core 8 glycans. N-glycan heterogeneity at Asn-66: dHex1Hex5HexNAc4 (major) and dHex1Hex6HexNAc5 (minor).

It localises to the cell membrane. Functionally, negative regulator of hepatic phosphatidylinositol 3-kinase (PI3K) activity. The polypeptide is Phosphoinositide-3-kinase-interacting protein 1 (PIK3IP1) (Homo sapiens (Human)).